Reading from the N-terminus, the 173-residue chain is MVYFVSMMMIGLILGLMGVASNPSPYYAALGLVTAAGVGCGLLVSYGGSFMSLILFLIYLGGMLVVFAYTAALAAEPYPEAWGDWSVLMYVGIYLTGLVIAGKYFLVGKWGDSWAGVEELSSFEVVRGDFGGVALLYSLGGWMLVLSGWVLLVTLFVVLEVTRGLSWGTLRAV.

The next 5 helical transmembrane spans lie at 1-21 (MVYF…GVAS), 28-48 (AALG…SYGG), 53-73 (LILF…TAAL), 87-107 (VLMY…YFLV), and 139-159 (LGGW…FVVL).

Belongs to the complex I subunit 6 family.

It is found in the mitochondrion membrane. The catalysed reaction is a ubiquinone + NADH + 5 H(+)(in) = a ubiquinol + NAD(+) + 4 H(+)(out). Its function is as follows. Core subunit of the mitochondrial membrane respiratory chain NADH dehydrogenase (Complex I) that is believed to belong to the minimal assembly required for catalysis. Complex I functions in the transfer of electrons from NADH to the respiratory chain. The immediate electron acceptor for the enzyme is believed to be ubiquinone. The sequence is that of NADH-ubiquinone oxidoreductase chain 6 (MT-ND6) from Scyliorhinus canicula (Small-spotted catshark).